Reading from the N-terminus, the 84-residue chain is Venom protein SynTx (84 aa).

The first 19 residues, 1–19 (TLLLTLVVVTIVCLDLGYT), serve as a signal peptide directing secretion. Disulfide bonds link Cys22–Cys43, Cys36–Cys61, Cys65–Cys76, and Cys77–Cys82.

The protein belongs to the three-finger toxin family. Short-chain subfamily. Aminergic toxin sub-subfamily. In terms of assembly, homodimer; disulfide-linked. As to expression, expressed by the venom gland.

The protein localises to the secreted. Its function is as follows. This protein shows a synergetic toxic effect in that it enhances the toxicity of other toxins. The chain is Venom protein SynTx from Dendroaspis jamesoni jamesoni (Jameson's mamba).